Here is a 238-residue protein sequence, read N- to C-terminus: Uridylate kinase (238 aa).

Residue 12-15 (KLSG) coordinates ATP. Gly54 is a UMP binding site. Residues Gly55 and Arg59 each coordinate ATP. UMP-binding positions include Asp74 and 135–142 (TGNPFFTT). ATP contacts are provided by Thr162, Tyr168, and Asp171.

The protein belongs to the UMP kinase family. Homohexamer.

It is found in the cytoplasm. The enzyme catalyses UMP + ATP = UDP + ADP. Its pathway is pyrimidine metabolism; CTP biosynthesis via de novo pathway; UDP from UMP (UMPK route): step 1/1. Its activity is regulated as follows. Inhibited by UTP. Functionally, catalyzes the reversible phosphorylation of UMP to UDP. The sequence is that of Uridylate kinase from Bordetella avium (strain 197N).